A 146-amino-acid chain; its full sequence is Hemoglobin subunit beta (146 aa).

Val1 is modified (N-acetylvaline). The Globin domain occupies 2–146; that stretch reads HLSGGEKSAV…VAHALGHKYH (145 aa). Thr12 bears the Phosphothreonine mark. Lys59 is modified (N6-acetyllysine). His63 is a heme b binding site. Lys82 is subject to N6-acetyllysine. Residue His92 participates in heme b binding. At Cys93 the chain carries S-nitrosocysteine. Residue Lys144 is modified to N6-acetyllysine.

Belongs to the globin family. Heterotetramer of two alpha chains and two beta chains. As to expression, red blood cells.

Functionally, involved in oxygen transport from the lung to the various peripheral tissues. The protein is Hemoglobin subunit beta (HBB) of Ornithorhynchus anatinus (Duckbill platypus).